Here is a 921-residue protein sequence, read N- to C-terminus: DNA mismatch repair protein MutS 1 (921 aa).

619-626 (GPNMSGKS) contacts ATP. Residues 837–887 (FRDGAAQSGGAAAGSTAEPVATDGDPEHAPGEAAAEGPKGDERAASLDSET) form a disordered region. Residues 840 to 853 (GAAQSGGAAAGSTA) show a composition bias toward low complexity.

The protein belongs to the DNA mismatch repair MutS family.

Its function is as follows. This protein is involved in the repair of mismatches in DNA. It is possible that it carries out the mismatch recognition step. This protein has a weak ATPase activity. The protein is DNA mismatch repair protein MutS 1 of Haloarcula marismortui (strain ATCC 43049 / DSM 3752 / JCM 8966 / VKM B-1809) (Halobacterium marismortui).